The primary structure comprises 359 residues: MALVPMRLLLDHAAENGYGIPAFNVNNMEQIISIMQAADETDSPVILQASRGARSYAGENFLRHLVLGAVETYPHIPIAMHQDHGNSPATCYSAIRNGFTSVMMDGSLEADAKTPASFEYNVNVTAEVVKVAHSVGASVEGELGCLGSLETGQGEAEDGHGFEGKLDHSQLLTDPEEAVEFVNKTQVDALAVAIGTSHGAYKFTRKPTGEVLAISRIEEIHRLLPNTHLVMHGSSSVPQEWIDMINEFGGAIPETYGVPVEEIQKGIKSGVRKVNIDTDNRLAITAAFREAAAKDPKNFDPRHFLKPSIKYMKQVCADRYQQFWTAGNASKIKQLTLDDYAAKYAKGELTATSRTSVAV.

Ser50 contributes to the D-glyceraldehyde 3-phosphate binding site. The Proton donor role is filled by Asp83. Residues His84, Asp105, Glu142, and His198 each coordinate Zn(2+). Gly199 serves as a coordination point for dihydroxyacetone phosphate. His232 contacts Zn(2+). Dihydroxyacetone phosphate-binding positions include 233 to 235 and 275 to 278; these read GSS and NIDT.

It belongs to the class II fructose-bisphosphate aldolase family. The cofactor is Zn(2+).

The enzyme catalyses beta-D-fructose 1,6-bisphosphate = D-glyceraldehyde 3-phosphate + dihydroxyacetone phosphate. Its pathway is carbohydrate degradation; glycolysis; D-glyceraldehyde 3-phosphate and glycerone phosphate from D-glucose: step 4/4. Its function is as follows. Catalyzes the aldol condensation of dihydroxyacetone phosphate (DHAP or glycerone-phosphate) with glyceraldehyde 3-phosphate (G3P) to form fructose 1,6-bisphosphate (FBP) in gluconeogenesis and the reverse reaction in glycolysis. In Synechocystis sp. (strain ATCC 27184 / PCC 6803 / Kazusa), this protein is Fructose-bisphosphate aldolase class 2 (fbaA).